The following is a 321-amino-acid chain: Glycerol-3-phosphate dehydrogenase [NAD(P)+] (321 aa).

Residues S10, W11, R31, R32, Y47, and K98 each coordinate NADPH. 3 residues coordinate sn-glycerol 3-phosphate: K98, G125, and S127. A129 provides a ligand contact to NADPH. 5 residues coordinate sn-glycerol 3-phosphate: K177, D230, S240, R241, and N242. The active-site Proton acceptor is K177. R241 is a binding site for NADPH. The NADPH site is built by V265 and E267.

It belongs to the NAD-dependent glycerol-3-phosphate dehydrogenase family.

The protein resides in the cytoplasm. The catalysed reaction is sn-glycerol 3-phosphate + NAD(+) = dihydroxyacetone phosphate + NADH + H(+). It catalyses the reaction sn-glycerol 3-phosphate + NADP(+) = dihydroxyacetone phosphate + NADPH + H(+). The protein operates within membrane lipid metabolism; glycerophospholipid metabolism. Catalyzes the reduction of the glycolytic intermediate dihydroxyacetone phosphate (DHAP) to sn-glycerol 3-phosphate (G3P), the key precursor for phospholipid synthesis. The polypeptide is Glycerol-3-phosphate dehydrogenase [NAD(P)+] (Thermotoga sp. (strain RQ2)).